The sequence spans 228 residues: DNA mismatch repair protein MutH (228 aa).

It belongs to the MutH family.

The protein resides in the cytoplasm. Functionally, sequence-specific endonuclease that cleaves unmethylated GATC sequences. It is involved in DNA mismatch repair. The protein is DNA mismatch repair protein MutH of Photorhabdus laumondii subsp. laumondii (strain DSM 15139 / CIP 105565 / TT01) (Photorhabdus luminescens subsp. laumondii).